We begin with the raw amino-acid sequence, 814 residues long: Putative serine/threonine-protein kinase-like protein CCR3 (814 aa).

The signal sequence occupies residues 1-30 (MKRFINSTVTFSVTVTIAVIIFFLLSPVTS). N6, N68, N136, N215, N226, N251, N260, N275, N299, and N309 each carry an N-linked (GlcNAc...) asparagine glycan. The Extracellular segment spans residues 31 to 393 (LGSGSTYAVV…SSPPSKALTR (363 aa)). A compositionally biased stretch (pro residues) spans 366 to 381 (SQFPLPPPPPPPPPSP). The tract at residues 366-388 (SQFPLPPPPPPPPPSPSTSSPPS) is disordered. Residues 394-414 (GLLAFAIVGSVGAFAGICSVV) form a helical membrane-spanning segment. At 415–814 (YCLWTGVCLG…SSGICSIVSD (400 aa)) the chain is on the cytoplasmic side. Residues 433–478 (QPTITRGGSNSRSNSSNSRSLSIRRQGSRMLSMRRQRSGTSSMKHA) are disordered. Residues 441 to 457 (SNSRSNSSNSRSLSIRR) are compositionally biased toward low complexity. The Protein kinase domain occupies 496 to 794 (FSLENKIGSG…DIVGNLERAL (299 aa)). ATP contacts are provided by residues 502-510 (IGSGSFGVV) and K524. D631 acts as the Proton acceptor in catalysis.

This sequence belongs to the protein kinase superfamily. Ser/Thr protein kinase family. In terms of assembly, homodimer. Expressed in roots, leaves, shoot apical meristems (SAM), and floral buds.

It is found in the membrane. The enzyme catalyses L-seryl-[protein] + ATP = O-phospho-L-seryl-[protein] + ADP + H(+). The catalysed reaction is L-threonyl-[protein] + ATP = O-phospho-L-threonyl-[protein] + ADP + H(+). Serine/threonine-protein kinase. In Arabidopsis thaliana (Mouse-ear cress), this protein is Putative serine/threonine-protein kinase-like protein CCR3 (CCR3).